The following is a 160-amino-acid chain: Ureidoglycolate lyase (160 aa).

The protein belongs to the ureidoglycolate lyase family. Homodimer. It depends on Ni(2+) as a cofactor.

The catalysed reaction is (S)-ureidoglycolate = urea + glyoxylate. Its pathway is nitrogen metabolism; (S)-allantoin degradation. Catalyzes the catabolism of the allantoin degradation intermediate (S)-ureidoglycolate, generating urea and glyoxylate. Involved in the anaerobic utilization of allantoin as sole nitrogen source. Reinforces the induction of genes involved in the degradation of allantoin and glyoxylate by producing glyoxylate. The polypeptide is Ureidoglycolate lyase (Escherichia coli O127:H6 (strain E2348/69 / EPEC)).